Here is a 125-residue protein sequence, read N- to C-terminus: Large ribosomal subunit protein bL12 (125 aa).

The protein belongs to the bacterial ribosomal protein bL12 family. In terms of assembly, homodimer. Part of the ribosomal stalk of the 50S ribosomal subunit. Forms a multimeric L10(L12)X complex, where L10 forms an elongated spine to which 2 to 4 L12 dimers bind in a sequential fashion. Binds GTP-bound translation factors.

Its function is as follows. Forms part of the ribosomal stalk which helps the ribosome interact with GTP-bound translation factors. Is thus essential for accurate translation. This is Large ribosomal subunit protein bL12 from Helicobacter pylori (strain HPAG1).